Here is a 346-residue protein sequence, read N- to C-terminus: uncharacterized protein (346 aa).

Residues 321-346 form a disordered region; it reads TPWGTHSVAGVGPPPYARSGPASATT.

This is an uncharacterized protein from Mycobacterium tuberculosis (strain CDC 1551 / Oshkosh).